A 1240-amino-acid polypeptide reads, in one-letter code: Phospholipid-transporting ATPase 6 (1240 aa).

The Cytoplasmic portion of the chain corresponds to 1–75; sequence MARRRIRSRI…TTRYNLLTFL (75 aa). A helical membrane pass occupies residues 76–97; the sequence is PKCLYEQFHRVANFYFLVAAIL. Topologically, residues 98 to 101 are extracellular; the sequence is SVFP. A helical membrane pass occupies residues 102–124; it reads LSPFNKWSMIAPLVFVVGLSMGK. The Cytoplasmic portion of the chain corresponds to 125 to 306; sequence EALEDWRRFM…SRIEKRMDYI (182 aa). The helical transmembrane segment at 307–328 threads the bilayer; that stretch reads IYTLFALLLTVSFISSLGFAVM. Topologically, residues 329–360 are extracellular; that stretch reads TKLLMAEWWYLRPDKPESLTNPTNPLYAWVVH. Residues 361 to 378 form a helical membrane-spanning segment; the sequence is LITALLLYGYLIPISLYV. At 379 to 943 the chain is on the cytoplasmic side; the sequence is SIEVVKVLQA…HGHWCYKRIA (565 aa). The active-site 4-aspartylphosphate intermediate is aspartate 426. A Glycyl lysine isopeptide (Lys-Gly) (interchain with G-Cter in ubiquitin) cross-link involves residue lysine 625. Aspartate 888 and aspartate 892 together coordinate Mg(2+). A helical transmembrane segment spans residues 944–963; it reads QMICYFFYKNITFGLTLFYF. Over 964-977 the chain is Extracellular; that stretch reads ECFTGFSGQSIYND. A helical membrane pass occupies residues 978–997; it reads SYLLLFNVVLTSLPVISLGV. Residues 998-1027 lie on the Cytoplasmic side of the membrane; that stretch reads FEQDVPSDVCLQFPALYQQGPKNLFFDWYR. Residues 1028–1050 form a helical membrane-spanning segment; it reads ILGWMGNGVYASIVIFTLNLGIF. Residues 1051–1063 are Extracellular-facing; the sequence is HVQSFRSDGQTAD. A helical membrane pass occupies residues 1064 to 1086; that stretch reads MNAMGTAMFTCIIWAVNVQIALT. The Cytoplasmic segment spans residues 1087–1092; it reads MSHFTW. The helical transmembrane segment at 1093-1113 threads the bilayer; the sequence is IQHVMIWGSIGAWYVFLALYG. The Extracellular portion of the chain corresponds to 1114–1130; sequence MLPVKLSGNIFHMLVEI. Residues 1131-1155 traverse the membrane as a helical segment; the sequence is LAPAPIFWLTSLLVIAATTLPYLFH. The Cytoplasmic portion of the chain corresponds to 1156–1240; the sequence is ISYQRSVNPL…SNDTPSSNSQ (85 aa).

This sequence belongs to the cation transport ATPase (P-type) (TC 3.A.3) family. Type IV subfamily.

Its subcellular location is the cell membrane. The protein localises to the endomembrane system. It carries out the reaction ATP + H2O + phospholipidSide 1 = ADP + phosphate + phospholipidSide 2.. In terms of biological role, involved in transport of phospholipids and in regulation of pollen plasma membrane lipid asymmetry. The polypeptide is Phospholipid-transporting ATPase 6 (Arabidopsis thaliana (Mouse-ear cress)).